We begin with the raw amino-acid sequence, 1186 residues long: ATP-dependent helicase/deoxyribonuclease subunit B (1186 aa).

This sequence belongs to the helicase family. AddB/RexB type 2 subfamily. Heterodimer of AddA and RexB. Mg(2+) serves as cofactor.

Its function is as follows. The heterodimer acts as both an ATP-dependent DNA helicase and an ATP-dependent, dual-direction single-stranded exonuclease. Recognizes the chi site generating a DNA molecule suitable for the initiation of homologous recombination. This subunit has 5' -&gt; 3' nuclease activity but not helicase activity. This Latilactobacillus sakei subsp. sakei (strain 23K) (Lactobacillus sakei subsp. sakei) protein is ATP-dependent helicase/deoxyribonuclease subunit B.